A 154-amino-acid chain; its full sequence is Myoglobin (154 aa).

The Globin domain maps to 2–148 (GLSDGEWQLV…FRKDMASNYK (147 aa)). S4 is subject to Phosphoserine. H65 provides a ligand contact to nitrite. H65 serves as a coordination point for O2. Phosphothreonine is present on T68. Position 94 (H94) interacts with heme b.

This sequence belongs to the globin family. Monomeric.

The protein localises to the cytoplasm. It localises to the sarcoplasm. It catalyses the reaction Fe(III)-heme b-[protein] + nitric oxide + H2O = Fe(II)-heme b-[protein] + nitrite + 2 H(+). It carries out the reaction H2O2 + AH2 = A + 2 H2O. In terms of biological role, monomeric heme protein which primary function is to store oxygen and facilitate its diffusion within muscle tissues. Reversibly binds oxygen through a pentacoordinated heme iron and enables its timely and efficient release as needed during periods of heightened demand. Depending on the oxidative conditions of tissues and cells, and in addition to its ability to bind oxygen, it also has a nitrite reductase activity whereby it regulates the production of bioactive nitric oxide. Under stress conditions, like hypoxia and anoxia, it also protects cells against reactive oxygen species thanks to its pseudoperoxidase activity. This is Myoglobin (MB) from Pongo pygmaeus (Bornean orangutan).